The chain runs to 297 residues: MGFVKVVKNKAYFKRYQVKFRRRREGKTDYYARKRLVIQDKNKYNTPKYRMIVRVTNRDIICQIAYARIEGDMIVCAAYAHELPKYGVKVGLTNYAAAYCTGLLLARRLLNRFGMDKIYEGQVEVTGDEYNVESIDGQPGAFTCYLDAGLARTTTGNKVFGALKGAVDGGLSIPHSTKRFPGYDSESKEFNAEVHRKHIMGQNVADYMRYLMEEDEDAYKKQFSQYIKNSVTPDMMEEMYKKAHAAIRENPVYEKKPKKEVKKKRWNRPKMSLAQKKDRVAQKKASFLRAQERAAES.

At G2 the chain carries N-acetylglycine. N6-acetyllysine occurs at positions 5 and 48. The residue at position 185 (S185) is a Phosphoserine. The residue at position 220 (K220) is an N6-acetyllysine; alternate. K220 is covalently cross-linked (Glycyl lysine isopeptide (Lys-Gly) (interchain with G-Cter in SUMO1); alternate). Residue K220 forms a Glycyl lysine isopeptide (Lys-Gly) (interchain with G-Cter in SUMO2); alternate linkage. T232 is modified (phosphothreonine). The tract at residues 253–297 (YEKKPKKEVKKKRWNRPKMSLAQKKDRVAQKKASFLRAQERAAES) is disordered. Residues 258–268 (KKEVKKKRWNR) show a composition bias toward basic residues. S272 carries the phosphoserine modification.

This sequence belongs to the universal ribosomal protein uL18 family. As to quaternary structure, component of the large ribosomal subunit (LSU). Part of the 5S RNP complex, which is a LSU subcomplex composed of the 5S RNA, RPL5 and RPL11. Component of a hexameric 5S RNP precursor complex, composed of 5S RNA, RRS1, RPF2/BXDC1, RPL5, RPL11 and HEATR3; this complex acts as a precursor for ribosome assembly. Interacts with isoform 1 of NVL in an ATP-dependent manner. Interacts with RRP1B. Interacts with IPO5, IPO7 and KPNB1; these interactions may be involved in RPL5 nuclear import for the assembly of ribosomal subunits.

Its subcellular location is the cytoplasm. The protein localises to the nucleus. The protein resides in the nucleolus. In terms of biological role, component of the ribosome, a large ribonucleoprotein complex responsible for the synthesis of proteins in the cell. The small ribosomal subunit (SSU) binds messenger RNAs (mRNAs) and translates the encoded message by selecting cognate aminoacyl-transfer RNA (tRNA) molecules. The large subunit (LSU) contains the ribosomal catalytic site termed the peptidyl transferase center (PTC), which catalyzes the formation of peptide bonds, thereby polymerizing the amino acids delivered by tRNAs into a polypeptide chain. The nascent polypeptides leave the ribosome through a tunnel in the LSU and interact with protein factors that function in enzymatic processing, targeting, and the membrane insertion of nascent chains at the exit of the ribosomal tunnel. As part of the 5S RNP/5S ribonucleoprotein particle it is an essential component of the LSU, required for its formation and the maturation of rRNAs. It also couples ribosome biogenesis to p53/TP53 activation. As part of the 5S RNP it accumulates in the nucleoplasm and inhibits MDM2, when ribosome biogenesis is perturbed, mediating the stabilization and the activation of TP53. In Homo sapiens (Human), this protein is Large ribosomal subunit protein uL18 (RPL5).